Reading from the N-terminus, the 356-residue chain is Malate dehydrogenase, glyoxysomal (356 aa).

A glyoxysome-targeting transit peptide spans 1–36 (MQPIPDVNQRIARISAHLHPPKYQMEESSVLRRANC). NAD(+) contacts are provided by residues 51–57 (GAAGGIG) and Asp-77. Residues Arg-124 and Arg-130 each coordinate substrate. NAD(+) is bound by residues Asn-137 and 160-162 (ISN). Substrate contacts are provided by Asn-162 and Arg-196. Residue His-220 is the Proton acceptor of the active site. Met-271 contacts NAD(+).

Belongs to the LDH/MDH superfamily. MDH type 1 family. Homodimer.

The protein localises to the glyoxysome. It catalyses the reaction (S)-malate + NAD(+) = oxaloacetate + NADH + H(+). The polypeptide is Malate dehydrogenase, glyoxysomal (MDHG) (Cucumis sativus (Cucumber)).